The following is a 1213-amino-acid chain: DNA-directed RNA polymerase subunit beta' (1213 aa).

Zn(2+) is bound by residues Cys-60, Cys-62, Cys-75, and Cys-78. Mg(2+) contacts are provided by Asp-450, Asp-452, and Asp-454. Cys-819, Cys-893, Cys-900, and Cys-903 together coordinate Zn(2+).

The protein belongs to the RNA polymerase beta' chain family. The RNAP catalytic core consists of 2 alpha, 1 beta, 1 beta' and 1 omega subunit. When a sigma factor is associated with the core the holoenzyme is formed, which can initiate transcription. It depends on Mg(2+) as a cofactor. Zn(2+) serves as cofactor.

It catalyses the reaction RNA(n) + a ribonucleoside 5'-triphosphate = RNA(n+1) + diphosphate. Its function is as follows. DNA-dependent RNA polymerase catalyzes the transcription of DNA into RNA using the four ribonucleoside triphosphates as substrates. The polypeptide is DNA-directed RNA polymerase subunit beta' (Streptococcus pyogenes serotype M4 (strain MGAS10750)).